Consider the following 249-residue polypeptide: Type I iodothyronine deiodinase (249 aa).

Residues Met1–Arg12 are Extracellular-facing. A helical; Signal-anchor for type III membrane protein transmembrane segment spans residues Leu13 to Phe33. The Cytoplasmic portion of the chain corresponds to Pro34–Ser249. Residue Sec126 is part of the active site. Position 126 (Sec126) is a non-standard amino acid, selenocysteine.

It belongs to the iodothyronine deiodinase family. In terms of assembly, predominantly monomer. Can form homodimers but homodimerization is not essential for enzyme activity.

The protein resides in the cell membrane. It is found in the endoplasmic reticulum membrane. Its subcellular location is the basolateral cell membrane. It catalyses the reaction 3,3',5-triiodo-L-thyronine + iodide + A + H(+) = L-thyroxine + AH2. The catalysed reaction is 3,3',5'-triiodo-L-thyronine + iodide + A + H(+) = L-thyroxine + AH2. It carries out the reaction 3,3'-diiodo-L-thyronine + iodide + A + H(+) = 3,3',5'-triiodo-L-thyronine + AH2. The enzyme catalyses 3,3'-diiodo-L-thyronine + iodide + A + H(+) = 3,3',5-triiodo-L-thyronine + AH2. It catalyses the reaction 3'-iodo-L-thyronine + iodide + A + H(+) = 3',5'-diiodo-L-thyronine + AH2. The catalysed reaction is 3-iodo-L-thyronine + iodide + A + H(+) = 3,5-diiodo-L-thyronine + AH2. It carries out the reaction 3-iodo-L-thyronine + iodide + A + H(+) = 3,3'-diiodo-L-thyronine + AH2. The enzyme catalyses 3,3'-diiodothyronamine + iodide + A + H(+) = 3,3',5'-triiodothyronamine + AH2. It catalyses the reaction 3'-iodothyronamine + iodide + A + H(+) = 3',5'-diiodothyronamine + AH2. The catalysed reaction is 3-iodothyronamine + iodide + A + H(+) = 3,3'-diiodothyronamine + AH2. It carries out the reaction 3,3'-diiodothyronamine + iodide + A + H(+) = 3,3',5-triiodothyronamine + AH2. The enzyme catalyses 3-iodothyronamine + iodide + A + H(+) = 3,5-diiodothyronamine + AH2. It catalyses the reaction 3,3'-diiodo-L-thyronine sulfate + iodide + A + H(+) = 3,3',5'-triiodo-L-thyronine sulfate + AH2. The catalysed reaction is 3,3',5'-triiodo-L-thyronine sulfate + iodide + A + H(+) = L-thyroxine sulfate + AH2. It carries out the reaction 3,3'-diiodo-L-thyronine sulfate + iodide + A + H(+) = 3,3',5-triiodo-L-thyronine sulfate + AH2. Deiodination of substrates 3,3',5'-triiodothyronine, 3,3',5'-triiodothyronamine and 3',5'- diiodothyronamine are inhibited by 6n-propyl-2-thiouracil (PTU). Plays a crucial role in the metabolism of thyroid hormones (TH) and has specific roles in TH activation and inactivation by deiodination. Catalyzes the deiodination of L-thyroxine (T4) to 3,5,3'-triiodothyronine (T3), 3,3',5'-triiodothyronine (rT3) to 3,3'-diiodothyronine (3,3'-T2) and 3',5'-diiodothyronine (3',5'-T2) to 3'-monoiodothyronine (3'-T1) via outer-ring deiodination (ORD). Catalyzes the deiodination of T4 to 3,3',5'-triiodothyronine (rT3) via inner-ring deiodination (IRD). Catalyzes the deiodination of T3 to 3,3'-T2, 3,5-diiodothyronine (3,5-T2) to 3- monoiodothyronine (3-T1) and 3,3'-T2 to 3-T1 via IRD. Catalyzes the phenolic ring deiodinations of 3,3',5'-triiodothyronamine and 3',5'-diiodothyronamine. Catalyzes the phenolic ring deiodination of 3,3'-diiodothyronamine and tyrosyl ring deiodinations of 3,5,3'-triiodothyronamine and 3,5-diiodothyronamine. Catalyzes the deiodination of L-thyroxine sulfate and 3,3',5-triiodo-L-thyronine sulfate via IRD and of 3,3',5'-triiodo-L-thyronine sulfate via ORD. The polypeptide is Type I iodothyronine deiodinase (DIO1) (Homo sapiens (Human)).